We begin with the raw amino-acid sequence, 241 residues long: Geranylgeranylglyceryl phosphate synthase (241 aa).

Aspartate 26 and serine 52 together coordinate Mg(2+). Residues tyrosine 172 to glycine 178, glycine 204 to glycine 205, and glycine 226 to threonine 227 contribute to the sn-glycerol 1-phosphate site.

It belongs to the GGGP/HepGP synthase family. Group II subfamily. The cofactor is Mg(2+).

Its subcellular location is the cytoplasm. It catalyses the reaction sn-glycerol 1-phosphate + (2E,6E,10E)-geranylgeranyl diphosphate = sn-3-O-(geranylgeranyl)glycerol 1-phosphate + diphosphate. The protein operates within membrane lipid metabolism; glycerophospholipid metabolism. Functionally, prenyltransferase that catalyzes the transfer of the geranylgeranyl moiety of geranylgeranyl diphosphate (GGPP) to the C3 hydroxyl of sn-glycerol-1-phosphate (G1P). This reaction is the first ether-bond-formation step in the biosynthesis of archaeal membrane lipids. The polypeptide is Geranylgeranylglyceryl phosphate synthase (Hyperthermus butylicus (strain DSM 5456 / JCM 9403 / PLM1-5)).